A 258-amino-acid chain; its full sequence is Glutamate racemase (258 aa).

Residues 11–12 (DS) and 43–44 (YG) contribute to the substrate site. The active-site Proton donor/acceptor is C74. 75–76 (NT) contributes to the substrate binding site. The active-site Proton donor/acceptor is C187. A substrate-binding site is contributed by 188-189 (TH).

This sequence belongs to the aspartate/glutamate racemases family.

It catalyses the reaction L-glutamate = D-glutamate. The protein operates within cell wall biogenesis; peptidoglycan biosynthesis. Functionally, provides the (R)-glutamate required for cell wall biosynthesis. In Bifidobacterium adolescentis (strain ATCC 15703 / DSM 20083 / NCTC 11814 / E194a), this protein is Glutamate racemase.